The sequence spans 662 residues: Glycogen debranching enzyme (662 aa).

Asp338 acts as the Nucleophile in catalysis. Glu373 acts as the Proton donor in catalysis.

It belongs to the glycosyl hydrolase 13 family.

The catalysed reaction is Hydrolysis of (1-&gt;6)-alpha-D-glucosidic linkages to branches with degrees of polymerization of three or four glucose residues in limit dextrin.. It participates in glycan degradation; glycogen degradation. Removes maltotriose and maltotetraose chains that are attached by 1,6-alpha-linkage to the limit dextrin main chain, generating a debranched limit dextrin. This chain is Glycogen debranching enzyme, found in Yersinia pestis bv. Antiqua (strain Angola).